A 397-amino-acid polypeptide reads, in one-letter code: MKRVIILMMDSFGIGGAADAAKFGDEGANTLASVAKLNNGLKIPNLISLGLVKAAEASAGVKIETGPQPPAQVNIPSKYGFMREQSHGKDTLSGHWEMAGVPVLFDWGYFKPGYPSFPKELIEQICKEAGIDKILGNKAASGTEILEELGEEHIKTGKPICYTSADSVFQIAAHEKHFGLERLYTICEIAFKYLKPYKIARVIARPFEGERKGEFKRTKNRHDYAVKPPAPTVLDFLKENGGNVISIGKINDIYAKQGITKAVKASGLEELWNTTIEETKNASGNSIIFTNFVDFDMVWGHRRDFKGYAGGLEYFDSRLPELANILQEGDLVFITADHGCDPSYKGTDHTRENVPAIMFGKNVKNGFIGGRETYSDLGQTVAEYLGITKLNNGTSFL.

Positions 10, 296, 301, 337, 338, and 349 each coordinate Mn(2+).

This sequence belongs to the phosphopentomutase family. Mn(2+) serves as cofactor.

Its subcellular location is the cytoplasm. It catalyses the reaction 2-deoxy-alpha-D-ribose 1-phosphate = 2-deoxy-D-ribose 5-phosphate. The enzyme catalyses alpha-D-ribose 1-phosphate = D-ribose 5-phosphate. The protein operates within carbohydrate degradation; 2-deoxy-D-ribose 1-phosphate degradation; D-glyceraldehyde 3-phosphate and acetaldehyde from 2-deoxy-alpha-D-ribose 1-phosphate: step 1/2. In terms of biological role, isomerase that catalyzes the conversion of deoxy-ribose 1-phosphate (dRib-1-P) and ribose 1-phosphate (Rib-1-P) to deoxy-ribose 5-phosphate (dRib-5-P) and ribose 5-phosphate (Rib-5-P), respectively. The sequence is that of Phosphopentomutase from Elusimicrobium minutum (strain Pei191).